The chain runs to 383 residues: NIPA-like protein 2 (383 aa).

Asn23 and Asn33 each carry an N-linked (GlcNAc...) asparagine glycan. The next 9 membrane-spanning stretches (helical) occupy residues 46-66, 88-108, 115-135, 144-164, 177-197, 208-228, 243-263, 278-298, and 306-326; these read IHLF…ISLN, VLWL…FAAY, LIAP…VLFL, LLGM…APNI, FVGW…CILL, IVVL…SVKA, LTYA…VFQV, VVPV…IIFY, and FLTV…VFLV. The segment at 352–383 is disordered; sequence DKVQPDSNGLSYGTLPDGGDSTRGQCGEKKES.

The protein belongs to the NIPA family.

It localises to the membrane. The polypeptide is NIPA-like protein 2 (Nipal2) (Mus musculus (Mouse)).